Here is a 1041-residue protein sequence, read N- to C-terminus: Collagen alpha-2(I) chain (1041 aa).

Residues 1 to 1041 are disordered; the sequence is SGGFDFSFLP…FGYEGDFYRA (1041 aa). 4-hydroxyproline is present on residues Pro-10, Pro-13, Pro-39, and Pro-45. Low complexity-rich tracts occupy residues 25–45 and 55–76; these read LGPG…SGAP and EPGE…PPGK. The span at 77–91 shows a compositional bias: basic and acidic residues; sequence AGEDGHPGKPGRPGE. A 5-hydroxylysine; alternate modification is found at Lys-113. A glycan (O-linked (Gal...) hydroxylysine; alternate) is linked at Lys-113. 2 stretches are compositionally biased toward low complexity: residues 174–189 and 235–256; these read SVGP…SAGP and PGAN…AGAP. Residues 290–299 are compositionally biased toward gly residues; sequence GESGGKGEPG. The span at 300 to 310 shows a compositional bias: low complexity; the sequence is SAGPQGPPGSS. The span at 332-341 shows a compositional bias: gly residues; it reads GLRGGPGSRG. Residues 354-370 are compositionally biased toward low complexity; that stretch reads PAGARGASGPAGVRGPS. 4-hydroxyproline is present on residues Pro-376 and Pro-379. A compositionally biased stretch (low complexity) spans 405-424; the sequence is LPGIDGRPGPIGPAGARGEA. The segment covering 466–475 has biased composition (gly residues); it reads GVQGGKGEQG. Low complexity-rich tracts occupy residues 522-539 and 551-561; these read SGES…SRGP and EPGVVGAPGTA. Gly residues predominate over residues 562 to 571; it reads GPAGSGGLPG. Composition is skewed to low complexity over residues 594-638 and 645-665; these read VGTT…PRGS and VGPA…QPGA. Residues 666 to 675 are compositionally biased toward basic and acidic residues; the sequence is KGERGTKGPK. Low complexity predominate over residues 683–693; it reads PTGPVGSAGPA. Positions 703 to 712 are enriched in gly residues; the sequence is GSRGDGGPPG. Over residues 714-723 the composition is skewed to low complexity; that stretch reads TGFPGAAGRT. Residues 754–768 show a composition bias toward gly residues; it reads GPVGRGETGAGGPPG. 2 stretches are compositionally biased toward low complexity: residues 769–803 and 811–821; these read FTGE…LGLP and LPGVAGAVGEP. Residues 822–840 are compositionally biased toward gly residues; it reads GPLGIGPPGARGPSGGVPG. Low complexity-rich tracts occupy residues 874-887 and 903-918; these read YAGN…AGAP and EPGP…ALGP. Over residues 928–939 the composition is skewed to basic and acidic residues; that stretch reads RGDKGEAGDKGP. The segment covering 1013 to 1023 has biased composition (pro residues); it reads PAGPPGPPGPP.

It belongs to the fibrillar collagen family. Trimers of one alpha 2(I) and two alpha 1(I) chains. Interacts (via C-terminus) with TMEM131 (via PapD-L domain); the interaction is direct and is involved in assembly and TRAPPIII ER-to-Golgi transport complex-dependent secretion of collagen. Post-translationally, prolines at the third position of the tripeptide repeating unit (G-X-Y) are hydroxylated in some or all of the chains. In terms of tissue distribution, expressed in bones.

The protein resides in the secreted. The protein localises to the extracellular space. Its subcellular location is the extracellular matrix. Functionally, type I collagen is a member of group I collagen (fibrillar forming collagen). In Paramylodon harlani (Harlan's ground sloth), this protein is Collagen alpha-2(I) chain.